Reading from the N-terminus, the 487-residue chain is Betaine aldehyde dehydrogenase (487 aa).

The K(+) site is built by Ser26 and Asp93. Position 150–152 (150–152 (GAW)) interacts with NAD(+). The active-site Charge relay system is the Lys162. Residues 176–179 (KPSE) and 229–232 (SVPT) contribute to the NAD(+) site. Leu244 lines the K(+) pocket. The Proton acceptor role is filled by Glu250. Residues Gly252, Cys284, and Glu384 each coordinate NAD(+). Cys284 acts as the Nucleophile in catalysis. Residue Cys284 is modified to Cysteine sulfenic acid (-SOH). Positions 454 and 457 each coordinate K(+). Glu461 serves as the catalytic Charge relay system.

The protein belongs to the aldehyde dehydrogenase family. As to quaternary structure, dimer of dimers. K(+) is required as a cofactor.

It catalyses the reaction betaine aldehyde + NAD(+) + H2O = glycine betaine + NADH + 2 H(+). Its pathway is amine and polyamine biosynthesis; betaine biosynthesis via choline pathway; betaine from betaine aldehyde: step 1/1. In terms of biological role, involved in the biosynthesis of the osmoprotectant glycine betaine. Catalyzes the irreversible oxidation of betaine aldehyde to the corresponding acid. This is Betaine aldehyde dehydrogenase from Rhizobium leguminosarum bv. trifolii (strain WSM2304).